The sequence spans 72 residues: DNA-directed RNA polymerase subunit omega (72 aa).

This sequence belongs to the RNA polymerase subunit omega family. As to quaternary structure, the RNAP catalytic core consists of 2 alpha, 1 beta, 1 beta' and 1 omega subunit. When a sigma factor is associated with the core the holoenzyme is formed, which can initiate transcription.

It catalyses the reaction RNA(n) + a ribonucleoside 5'-triphosphate = RNA(n+1) + diphosphate. In terms of biological role, promotes RNA polymerase assembly. Latches the N- and C-terminal regions of the beta' subunit thereby facilitating its interaction with the beta and alpha subunits. The protein is DNA-directed RNA polymerase subunit omega of Laribacter hongkongensis (strain HLHK9).